Here is a 102-residue protein sequence, read N- to C-terminus: Small ribosomal subunit protein uS10 (102 aa).

This sequence belongs to the universal ribosomal protein uS10 family. As to quaternary structure, part of the 30S ribosomal subunit.

Its function is as follows. Involved in the binding of tRNA to the ribosomes. The chain is Small ribosomal subunit protein uS10 from Mesorhizobium japonicum (strain LMG 29417 / CECT 9101 / MAFF 303099) (Mesorhizobium loti (strain MAFF 303099)).